A 279-amino-acid chain; its full sequence is Energy-coupling factor transporter ATP-binding protein EcfA1 (279 aa).

Residues 6-240 form the ABC transporter domain; the sequence is VEFRNVSFRY…KDALREIGLD (235 aa). 40–47 is a binding site for ATP; that stretch reads GHNGSGKS.

Belongs to the ABC transporter superfamily. Energy-coupling factor EcfA family. As to quaternary structure, forms a stable energy-coupling factor (ECF) transporter complex composed of 2 membrane-embedded substrate-binding proteins (S component), 2 ATP-binding proteins (A component) and 2 transmembrane proteins (T component).

The protein localises to the cell membrane. ATP-binding (A) component of a common energy-coupling factor (ECF) ABC-transporter complex. Unlike classic ABC transporters this ECF transporter provides the energy necessary to transport a number of different substrates. The chain is Energy-coupling factor transporter ATP-binding protein EcfA1 from Oceanobacillus iheyensis (strain DSM 14371 / CIP 107618 / JCM 11309 / KCTC 3954 / HTE831).